The sequence spans 246 residues: Probable fimbrial chaperone YadV (246 aa).

Residues 1–25 form the signal peptide; the sequence is MFFNTKHTTALCFVTCMAFSSSSIA.

It belongs to the periplasmic pilus chaperone family.

It is found in the periplasm. In terms of biological role, part of the yadCKLM-htrE-yadVN fimbrial operon. Could contribute to adhesion to various surfaces in specific environmental niches. The chain is Probable fimbrial chaperone YadV (yadV) from Escherichia coli (strain K12).